Reading from the N-terminus, the 602-residue chain is MEKEVIAYLDNETIIDSQSVKNTNLKEIYFDNSKESLEVIRHSCAHLMAQAIKNLYPEAKFFVGPVIEDGFYYDFRVESKIGEEDLVKIEKKMKELAEAKIEISKYEITKNEALAKFQNDDLKQEVLLRIPDGAVSIYKQGEFEDLCRGPHVPNTKFLRFFKLTRVAGAYLGGDEKREMLTRIYGTAFADKESLKEYLTIIEEAKKRDHRKLGTELKLFTFDDEIGGGLPIWLSNGARLRSKLEHILYKIHRLRGYEPVRGPELLKADAWKISGHYANYKENMYFTQIDEQEYGIKPMNCVGHIKIYQSDVRSYRDLPLKFFEYGVVHRHEKSGVLHGLFRVREFTQDDAHIFCMPSQIKEQVLEILAFVDNLMKLFDFSYEMEISTKPEKAIGDDEIWEVATKALKEALDEQGLKYGIDEGGGAFYGPKIDIKITDALKRKWQCGTIQVDFNLPSRFKLEYTDSDNEKKQPVMLHRAILGSFERFIGILTEHCAGEFPFFIAPTAVGIVPIGEAHIAYAKEIQKELLELNIDSEVYEKNESLSKKIRTAEKQKLPMILVLGDDEVAKRSVALRDRRAKEQKNLSLDEFIKLVKEKMSEVHF.

The segment at D208–P499 is catalytic. The Zn(2+) site is built by C300, H351, and H476.

It belongs to the class-II aminoacyl-tRNA synthetase family. Homodimer. Zn(2+) is required as a cofactor.

The protein resides in the cytoplasm. It catalyses the reaction tRNA(Thr) + L-threonine + ATP = L-threonyl-tRNA(Thr) + AMP + diphosphate + H(+). In terms of biological role, catalyzes the attachment of threonine to tRNA(Thr) in a two-step reaction: L-threonine is first activated by ATP to form Thr-AMP and then transferred to the acceptor end of tRNA(Thr). Also edits incorrectly charged L-seryl-tRNA(Thr). This chain is Threonine--tRNA ligase, found in Campylobacter jejuni subsp. jejuni serotype O:6 (strain 81116 / NCTC 11828).